The sequence spans 423 residues: tRNA(Ile)-lysidine synthase (423 aa).

Serine 43–serine 48 serves as a coordination point for ATP.

Belongs to the tRNA(Ile)-lysidine synthase family.

Its subcellular location is the cytoplasm. The catalysed reaction is cytidine(34) in tRNA(Ile2) + L-lysine + ATP = lysidine(34) in tRNA(Ile2) + AMP + diphosphate + H(+). Functionally, ligates lysine onto the cytidine present at position 34 of the AUA codon-specific tRNA(Ile) that contains the anticodon CAU, in an ATP-dependent manner. Cytidine is converted to lysidine, thus changing the amino acid specificity of the tRNA from methionine to isoleucine. In Helicobacter hepaticus (strain ATCC 51449 / 3B1), this protein is tRNA(Ile)-lysidine synthase.